Here is a 387-residue protein sequence, read N- to C-terminus: Zinc homeostasis factor 1 (387 aa).

4 helical membrane-spanning segments follow: residues 10–30 (IILL…TGYA), 34–54 (LALI…LVAL), 77–97 (EILG…FIFM), and 113–133 (TLMF…IFLF). Residues 195–214 (SYTGNHNGAGTSKPVNNHGS) are compositionally biased toward polar residues. The tract at residues 195–221 (SYTGNHNGAGTSKPVNNHGSIEQDAPK) is disordered. The next 2 helical transmembrane spans lie at 234-254 (FLHV…ALFI) and 263-283 (FLFD…SAIP).

Belongs to the cation diffusion facilitator (CDF) transporter (TC 2.A.4) family. SLC30A subfamily.

Its subcellular location is the endoplasmic reticulum membrane. The protein resides in the nucleus membrane. Its function is as follows. Involved in zinc homeostasis, where it plays a role in its accumulation in the endoplasmic reticulum/nucleus. Also has a role in the sequestration of cadmium into the endoplasmic reticulum. This is Zinc homeostasis factor 1 (zhf1) from Schizosaccharomyces pombe (strain 972 / ATCC 24843) (Fission yeast).